A 211-amino-acid polypeptide reads, in one-letter code: Protein G12 (211 aa).

A signal peptide spans 1–19; it reads MKIAAFVVACLVATSAVSC.

The sequence is that of Protein G12 from Anopheles gambiae (African malaria mosquito).